The sequence spans 240 residues: Spore coat polysaccharide biosynthesis protein SpsF (240 aa).

The protein belongs to the CMP-NeuNAc synthase family.

The protein operates within spore coat biogenesis; spore coat polysaccharide biosynthesis. This is Spore coat polysaccharide biosynthesis protein SpsF (spsF) from Bacillus subtilis (strain 168).